A 390-amino-acid polypeptide reads, in one-letter code: Curcumin synthase 3 (390 aa).

Cys164 is an active-site residue.

The protein belongs to the thiolase-like superfamily. Chalcone/stilbene synthases family. In terms of assembly, homodimer.

It catalyses the reaction (E)-feruloylacetyl-CoA + (E)-feruloyl-CoA + H2O = curcumin + CO2 + 2 CoA. It carries out the reaction (E)-feruloylacetyl-CoA + (E)-4-coumaroyl-CoA + H2O = demethoxycurcumin + CO2 + 2 CoA. The catalysed reaction is (4-coumaroyl)acetyl-CoA + 4-coumaroyl-CoA + H2O = bisdemethoxycurcumin + CO2 + 2 CoA. Its pathway is secondary metabolite biosynthesis; flavonoid biosynthesis. Functionally, catalyzes the synthesis of curcumin by condensing feruloyl-CoA with a diketide-CoA in the curcuminoid biosynthesis. Also acts as a demethoxycurcumin synthase by accepting 4-coumaroyl-CoA as a starter substrate instead of feruloyl-CoA. The polypeptide is Curcumin synthase 3 (CURS3) (Curcuma longa (Turmeric)).